Reading from the N-terminus, the 254-residue chain is 5'-methylthioadenosine/S-adenosylhomocysteine nucleosidase (254 aa).

M1 bears the N-acetylmethionine mark. The active-site Proton acceptor is the E25. Residues T103 and K186–E189 each bind S-methyl-5'-thioadenosine. Adenine is bound by residues K186 and D212. D212 (proton donor) is an active-site residue.

This sequence belongs to the PNP/UDP phosphorylase family. MtnN subfamily. As to quaternary structure, homodimer.

The catalysed reaction is S-methyl-5'-thioadenosine + H2O = 5-(methylsulfanyl)-D-ribose + adenine. It catalyses the reaction S-adenosyl-L-homocysteine + H2O = S-(5-deoxy-D-ribos-5-yl)-L-homocysteine + adenine. It carries out the reaction 5'-deoxyadenosine + H2O = 5-deoxy-D-ribose + adenine. It functions in the pathway amino-acid biosynthesis; L-methionine biosynthesis via salvage pathway; S-methyl-5-thio-alpha-D-ribose 1-phosphate from S-methyl-5'-thioadenosine (hydrolase route): step 1/2. Functionally, enzyme of the methionine cycle that catalyzes the irreversible cleavage of the glycosidic bond in 5'-methylthioadenosine (MTA) and S-adenosylhomocysteine (SAH/AdoHcy) to a lesser extent, to adenine and the corresponding thioribose, 5'-methylthioribose and S-ribosylhomocysteine, respectively. Contributes to the maintenance of AdoMet homeostasis and is required to sustain high rates of ethylene synthesis. The chain is 5'-methylthioadenosine/S-adenosylhomocysteine nucleosidase (MTN2) from Arabidopsis thaliana (Mouse-ear cress).